Here is a 105-residue protein sequence, read N- to C-terminus: Large ribosomal subunit protein bL21 (105 aa).

This sequence belongs to the bacterial ribosomal protein bL21 family. As to quaternary structure, part of the 50S ribosomal subunit. Contacts protein L20.

This protein binds to 23S rRNA in the presence of protein L20. The protein is Large ribosomal subunit protein bL21 of Methylobacterium nodulans (strain LMG 21967 / CNCM I-2342 / ORS 2060).